Consider the following 485-residue polypeptide: Glutamyl-tRNA(Gln) amidotransferase subunit A (485 aa).

Residues Lys75 and Ser150 each act as charge relay system in the active site. Ser174 (acyl-ester intermediate) is an active-site residue.

The protein belongs to the amidase family. GatA subfamily. In terms of assembly, heterotrimer of A, B and C subunits.

It carries out the reaction L-glutamyl-tRNA(Gln) + L-glutamine + ATP + H2O = L-glutaminyl-tRNA(Gln) + L-glutamate + ADP + phosphate + H(+). Functionally, allows the formation of correctly charged Gln-tRNA(Gln) through the transamidation of misacylated Glu-tRNA(Gln) in organisms which lack glutaminyl-tRNA synthetase. The reaction takes place in the presence of glutamine and ATP through an activated gamma-phospho-Glu-tRNA(Gln). The chain is Glutamyl-tRNA(Gln) amidotransferase subunit A from Picosynechococcus sp. (strain ATCC 27264 / PCC 7002 / PR-6) (Agmenellum quadruplicatum).